A 554-amino-acid polypeptide reads, in one-letter code: MRISASTVLLGAASAASAASFQNQAQHVLADNFHKAHDAVKPVADSFAHTTLESFEEAFNGMNSQAKALWDEIKLLVPENAFDKPTWFSKPKAAKRRKDWDHVVKGADVQKLWVKGADGEKHREVGGQLDNFNLRVKSVDPSKLGVDKVKQYSGYLDDEENDKHLFYWFFESRNDPKNDPVVLWLNGGPGCSSLTGLFLELGPSSIDKKLRVVSNEYAWNNNASVIFLDQPVNVGYSYSGNAVSNTVAAGKDVYALLTLFFHQFPEYAKQDFHIAGESYAGHYIPVFASEILSHKDRNINLKSVLIGNGLTDPLTQYEHYRPMACGEGGYPAVLSESECRSMDNALPRCQSLIRNCYESGSVWSCVPAAIYCNNQFIGPYQRTGQNVYDIRGKCEDDSNLCYSALGWISDYLNQKDVMDALGVEVEGYESCNFDINRNFLFQGDWMQPFHRLVPGILKEIPVLIYAGDADFICNWLGNKAWSEALEWPGKNGFNKAELEDLSLPKADKEYGKVKSSGNFTFMQIYQAGHMVPMDQPENSLDFLNRWLGGEWFEQ.

A signal peptide spans 1–17 (MRISASTVLLGAASAAS). Residues 18–137 (AASFQNQAQH…QLDNFNLRVK (120 aa)) constitute a propeptide that is removed on maturation. Disulfide bonds link cysteine 191-cysteine 431, cysteine 325-cysteine 339, cysteine 349-cysteine 372, cysteine 356-cysteine 365, and cysteine 394-cysteine 401. N-linked (GlcNAc...) asparagine glycosylation occurs at asparagine 222. Serine 278 is an active-site residue. Residue aspartate 470 is part of the active site. N-linked (GlcNAc...) asparagine glycosylation occurs at asparagine 518. The active site involves histidine 529.

The protein belongs to the peptidase S10 family.

The protein resides in the vacuole. The catalysed reaction is Release of a C-terminal amino acid with broad specificity.. Functionally, vacuolar carboxypeptidase involved in degradation of small peptides. Digests preferentially peptides containing an aliphatic or hydrophobic residue in P1' position, as well as methionine, leucine or phenylalanine in P1 position of ester substrate. The protein is Carboxypeptidase Y homolog A (cpyA) of Neurospora crassa (strain ATCC 24698 / 74-OR23-1A / CBS 708.71 / DSM 1257 / FGSC 987).